A 443-amino-acid chain; its full sequence is ATP-dependent protease ATPase subunit HslU (443 aa).

ATP-binding positions include isoleucine 18, 60–65, aspartate 256, glutamate 321, and arginine 393; that span reads GVGKTE.

Belongs to the ClpX chaperone family. HslU subfamily. In terms of assembly, a double ring-shaped homohexamer of HslV is capped on each side by a ring-shaped HslU homohexamer. The assembly of the HslU/HslV complex is dependent on binding of ATP.

The protein localises to the cytoplasm. Functionally, ATPase subunit of a proteasome-like degradation complex; this subunit has chaperone activity. The binding of ATP and its subsequent hydrolysis by HslU are essential for unfolding of protein substrates subsequently hydrolyzed by HslV. HslU recognizes the N-terminal part of its protein substrates and unfolds these before they are guided to HslV for hydrolysis. This Shigella dysenteriae serotype 1 (strain Sd197) protein is ATP-dependent protease ATPase subunit HslU.